Here is a 139-residue protein sequence, read N- to C-terminus: Translation initiation factor 2 subunit beta (139 aa).

It belongs to the eIF-2-beta/eIF-5 family. In terms of assembly, heterotrimer composed of an alpha, a beta and a gamma chain.

In terms of biological role, eIF-2 functions in the early steps of protein synthesis by forming a ternary complex with GTP and initiator tRNA. In Saccharolobus islandicus (strain Y.N.15.51 / Yellowstone #2) (Sulfolobus islandicus), this protein is Translation initiation factor 2 subunit beta.